The sequence spans 255 residues: Bouquet formation protein 3 (255 aa).

Helical transmembrane passes span 13–33 (IKVS…NYHL), 48–68 (IPYW…LLLQ), 72–94 (LGYG…YYLT), 99–116 (IAWA…ARCF), 132–152 (YSVS…LNYI), 172–192 (SLVA…GYVI), 205–225 (SLFL…SILF), and 235–255 (VVGA…ALSL).

The protein resides in the endoplasmic reticulum membrane. It is found in the nucleus inner membrane. Connects telomeres to the nuclear envelop (NE) during both vegetative growth and meiosis. This connection ensures clustering of telomeres to the spindle pole body (SPB) when cells enter meiotic prophase. This chain is Bouquet formation protein 3 (bqt3), found in Schizosaccharomyces pombe (strain 972 / ATCC 24843) (Fission yeast).